A 1415-amino-acid polypeptide reads, in one-letter code: DNA-directed RNA polymerase subunit beta' (1415 aa).

Residues cysteine 70, cysteine 72, cysteine 85, and cysteine 88 each contribute to the Zn(2+) site. Positions 461, 463, and 465 each coordinate Mg(2+). The Zn(2+) site is built by cysteine 820, cysteine 894, cysteine 901, and cysteine 904. The segment at 1382–1415 (ERERAQAIADEEQSLFIEPPPVVQATTEGEGDNA) is disordered.

This sequence belongs to the RNA polymerase beta' chain family. In terms of assembly, the RNAP catalytic core consists of 2 alpha, 1 beta, 1 beta' and 1 omega subunit. When a sigma factor is associated with the core the holoenzyme is formed, which can initiate transcription. The cofactor is Mg(2+). It depends on Zn(2+) as a cofactor.

The catalysed reaction is RNA(n) + a ribonucleoside 5'-triphosphate = RNA(n+1) + diphosphate. Functionally, DNA-dependent RNA polymerase catalyzes the transcription of DNA into RNA using the four ribonucleoside triphosphates as substrates. This chain is DNA-directed RNA polymerase subunit beta', found in Cupriavidus pinatubonensis (strain JMP 134 / LMG 1197) (Cupriavidus necator (strain JMP 134)).